The primary structure comprises 437 residues: Transcription factor TGAL5 (437 aa).

The tract at residues 33–75 (QEPYSNSQSVGSTTDSSSAQNTMSQAELVSPASMRSDSGQEQQ) is disordered. Over residues 37–50 (SNSQSVGSTTDSSS) the composition is skewed to low complexity. Residues 51 to 75 (AQNTMSQAELVSPASMRSDSGQEQQ) are compositionally biased toward polar residues. In terms of domain architecture, bZIP spans 126–170 (DAKTERRLAQNREAARKSRLRKKAYVQQLETSRIRLQQIEQELQR). Residues 128–148 (KTERRLAQNREAARKSRLRKK) are basic motif. The interval 154-168 (LETSRIRLQQIEQEL) is leucine-zipper. The DOG1 domain occupies 191–405 (AVMFDMDYTR…RALSSLWASR (215 aa)).

It belongs to the bZIP family. In terms of assembly, interacts with NPR5/NH4, NH5.1 and NH5.2.

It localises to the nucleus. Functionally, transcriptional regulator involved in defense response. The sequence is that of Transcription factor TGAL5 from Oryza sativa subsp. japonica (Rice).